Reading from the N-terminus, the 613-residue chain is Transcription factor Sp2 (613 aa).

Residues Met-1–Pro-32 are disordered. Residues Ala-23–Pro-32 are compositionally biased toward polar residues. Residue Ser-78 is modified to Phosphoserine. 2 disordered regions span residues Ser-170 to Gly-197 and Pro-225 to Ala-255. Positions Gln-185–Gly-197 are enriched in polar residues. The 9aaTAD; inactive motif lies at Gly-361–Gln-369. The segment covering Ala-374 to Ala-392 has biased composition (low complexity). Positions Ala-374 to Ser-402 are disordered. C2H2-type zinc fingers lie at residues His-525–His-549, Phe-555–His-579, and Phe-585–His-607.

This sequence belongs to the Sp1 C2H2-type zinc-finger protein family.

It is found in the nucleus. Its function is as follows. Binds to GC box promoters elements and selectively activates mRNA synthesis from genes that contain functional recognition sites. This chain is Transcription factor Sp2 (SP2), found in Bos taurus (Bovine).